Reading from the N-terminus, the 337-residue chain is Probable cytosolic iron-sulfur protein assembly protein CIAO1 homolog (337 aa).

WD repeat units follow at residues 15–54 (DDTS…DSKM), 65–104 (SHTR…FAEV), 109–148 (GHES…DFSV), 154–193 (PHTQ…WVTQ), 199–238 (CHVG…SKSA), 253–292 (NTRW…ESPV), and 301–337 (RHEL…ELEI).

This sequence belongs to the WD repeat CIA1 family.

Essential component of the cytosolic iron-sulfur (Fe/S) protein assembly machinery. Required for the maturation of extramitochondrial Fe/S proteins. The sequence is that of Probable cytosolic iron-sulfur protein assembly protein CIAO1 homolog from Caenorhabditis elegans.